The chain runs to 61 residues: Large ribosomal subunit protein uL30 (61 aa).

The protein belongs to the universal ribosomal protein uL30 family. Part of the 50S ribosomal subunit.

The sequence is that of Large ribosomal subunit protein uL30 from Bifidobacterium longum (strain DJO10A).